The sequence spans 97 residues: MPSQMEHAMETLMFTFHKYAGDKNYLSKEDLRALMEKEFPGFLENQRDPMALDKIMKDLDQCRDGKVGFQSFFSLVAGLTIACNDYFVVHMKQKGRK.

The 36-residue stretch at 47-82 folds into the EF-hand domain; it reads RDPMALDKIMKDLDQCRDGKVGFQSFFSLVAGLTIA. The tract at residues 60–71 is ancestral calcium site; sequence DQCRDGKVGFQS.

This sequence belongs to the S-100 family. As to quaternary structure, heterotetramer containing 2 light chains of S100A10/p11 and 2 heavy chains of ANXA2/p36.

Functionally, because S100A10 induces the dimerization of ANXA2/p36, it may function as a regulator of protein phosphorylation in that the ANXA2 monomer is the preferred target (in vitro) of tyrosine-specific kinase. This Gallus gallus (Chicken) protein is Protein S100-A10 (S100A10).